A 262-amino-acid chain; its full sequence is Tetrahydromethanopterin S-methyltransferase subunit C (262 aa).

6 consecutive transmembrane segments (helical) span residues 35 to 57 (FVPS…AGAN), 70 to 92 (GVPS…GVLI), 97 to 119 (GLPV…FIVG), 140 to 162 (LSLM…FSAD), 172 to 194 (GVIA…ACIG), and 214 to 236 (WLIF…FWLY).

This sequence belongs to the MtrC family. The complex is composed of 8 subunits; MtrA, MtrB, MtrC, MtrD, MtrE, MtrF, MtrG and MtrH.

It localises to the cell membrane. The catalysed reaction is 5-methyl-5,6,7,8-tetrahydromethanopterin + coenzyme M + 2 Na(+)(in) = 5,6,7,8-tetrahydromethanopterin + methyl-coenzyme M + 2 Na(+)(out). It functions in the pathway one-carbon metabolism; methanogenesis from CO(2); methyl-coenzyme M from 5,10-methylene-5,6,7,8-tetrahydromethanopterin: step 2/2. Its function is as follows. Part of a complex that catalyzes the formation of methyl-coenzyme M and tetrahydromethanopterin from coenzyme M and methyl-tetrahydromethanopterin. This is an energy-conserving, sodium-ion translocating step. This Methanococcus maripaludis (strain DSM 14266 / JCM 13030 / NBRC 101832 / S2 / LL) protein is Tetrahydromethanopterin S-methyltransferase subunit C.